Reading from the N-terminus, the 88-residue chain is Phosphocarrier protein HPr (88 aa).

The region spanning 1–88 is the HPr domain; sequence MEQASFVVID…EVLKKEGLAE (88 aa). Residue His15 is the Pros-phosphohistidine intermediate of the active site. Ser46 is subject to Phosphoserine; by HPrK/P.

It belongs to the HPr family.

The protein resides in the cytoplasm. Its activity is regulated as follows. Phosphorylation on Ser-46 inhibits the phosphoryl transfer from enzyme I to HPr. Functionally, general (non sugar-specific) component of the phosphoenolpyruvate-dependent sugar phosphotransferase system (sugar PTS). This major carbohydrate active-transport system catalyzes the phosphorylation of incoming sugar substrates concomitantly with their translocation across the cell membrane. The phosphoryl group from phosphoenolpyruvate (PEP) is transferred to the phosphoryl carrier protein HPr by enzyme I. Phospho-HPr then transfers it to the PTS EIIA domain. P-Ser-HPr interacts with the catabolite control protein A (CcpA), forming a complex that binds to DNA at the catabolite response elements cre, operator sites preceding a large number of catabolite-regulated genes. Thus, P-Ser-HPr is a corepressor in carbon catabolite repression (CCR), a mechanism that allows bacteria to coordinate and optimize the utilization of available carbon sources. P-Ser-HPr also plays a role in inducer exclusion, in which it probably interacts with several non-PTS permeases and inhibits their transport activity. In Listeria monocytogenes serovar 1/2a (strain ATCC BAA-679 / EGD-e), this protein is Phosphocarrier protein HPr (ptsH).